Reading from the N-terminus, the 233-residue chain is Germin-like protein 3-7 (233 aa).

Positions Met-1 to Ala-35 are cleaved as a signal peptide. A disulfide bridge connects residues Cys-44 and Cys-63. In terms of domain architecture, Cupin type-1 spans Ala-77–Lys-225. Mn(2+) is bound by residues His-125, His-127, Glu-132, and His-171. N-linked (GlcNAc...) asparagine glycosylation is present at Asn-178.

It belongs to the germin family. Oligomer (believed to be a pentamer but probably hexamer).

The protein localises to the secreted. It localises to the extracellular space. Its subcellular location is the apoplast. May play a role in plant defense. Probably has no oxalate oxidase activity even if the active site is conserved. This is Germin-like protein 3-7 (GER7) from Oryza sativa subsp. japonica (Rice).